The chain runs to 247 residues: 6-carboxyhexanoate--CoA ligase (247 aa).

The protein belongs to the BioW family. Homodimer. It depends on Mg(2+) as a cofactor.

The catalysed reaction is heptanedioate + ATP + CoA = 6-carboxyhexanoyl-CoA + AMP + diphosphate. It participates in metabolic intermediate metabolism; pimeloyl-CoA biosynthesis; pimeloyl-CoA from pimelate: step 1/1. Catalyzes the transformation of pimelate into pimeloyl-CoA with concomitant hydrolysis of ATP to AMP. In Persephonella marina (strain DSM 14350 / EX-H1), this protein is 6-carboxyhexanoate--CoA ligase.